Reading from the N-terminus, the 39-residue chain is Photosystem II reaction center protein J (39 aa).

Residues 7–27 (IPLWLVATIGGIAVLTVLGLF) traverse the membrane as a helical segment.

Belongs to the PsbJ family. PSII is composed of 1 copy each of membrane proteins PsbA, PsbB, PsbC, PsbD, PsbE, PsbF, PsbH, PsbI, PsbJ, PsbK, PsbL, PsbM, PsbT, PsbX, PsbY, PsbZ, Psb30/Ycf12, at least 3 peripheral proteins of the oxygen-evolving complex and a large number of cofactors. It forms dimeric complexes.

It localises to the plastid. The protein resides in the chloroplast thylakoid membrane. Functionally, one of the components of the core complex of photosystem II (PSII). PSII is a light-driven water:plastoquinone oxidoreductase that uses light energy to abstract electrons from H(2)O, generating O(2) and a proton gradient subsequently used for ATP formation. It consists of a core antenna complex that captures photons, and an electron transfer chain that converts photonic excitation into a charge separation. The polypeptide is Photosystem II reaction center protein J (Cyanidioschyzon merolae (strain NIES-3377 / 10D) (Unicellular red alga)).